The chain runs to 220 residues: Ras-related protein Rab-1 (220 aa).

14–21 (GDSGTGKS) lines the GTP pocket. The Effector region motif lies at 36 to 44 (YMSTIGVDF). Residues 62-66 (DTAGQ) and 121-124 (NKID) contribute to the GTP site. Cys219 carries S-geranylgeranyl cysteine lipidation.

Belongs to the small GTPase superfamily. Rab family.

Its subcellular location is the cell membrane. Its function is as follows. Protein transport. Probably involved in vesicular traffic from ER to Golgi. This Theileria annulata protein is Ras-related protein Rab-1 (rab1).